The primary structure comprises 118 residues: Holo-[acyl-carrier-protein] synthase (118 aa).

2 residues coordinate Mg(2+): D8 and E58.

It belongs to the P-Pant transferase superfamily. AcpS family. The cofactor is Mg(2+).

The protein resides in the cytoplasm. It catalyses the reaction apo-[ACP] + CoA = holo-[ACP] + adenosine 3',5'-bisphosphate + H(+). Its function is as follows. Transfers the 4'-phosphopantetheine moiety from coenzyme A to a Ser of acyl-carrier-protein. The protein is Holo-[acyl-carrier-protein] synthase of Listeria innocua serovar 6a (strain ATCC BAA-680 / CLIP 11262).